The sequence spans 105 residues: Large ribosomal subunit protein uL24 (105 aa).

The protein belongs to the universal ribosomal protein uL24 family. In terms of assembly, part of the 50S ribosomal subunit.

One of two assembly initiator proteins, it binds directly to the 5'-end of the 23S rRNA, where it nucleates assembly of the 50S subunit. Its function is as follows. One of the proteins that surrounds the polypeptide exit tunnel on the outside of the subunit. This is Large ribosomal subunit protein uL24 from Saccharophagus degradans (strain 2-40 / ATCC 43961 / DSM 17024).